The sequence spans 349 residues: DNA integrity scanning protein DisA (349 aa).

In terms of domain architecture, DAC spans 3-143 (KQDLMDIIVK…LKYRLKNFDE (141 aa)). ATP-binding positions include glycine 70, valine 88, and 101–105 (TRHRT).

It belongs to the DisA family. Homooctamer. Requires Mg(2+) as cofactor.

The enzyme catalyses 2 ATP = 3',3'-c-di-AMP + 2 diphosphate. In terms of biological role, participates in a DNA-damage check-point. DisA forms globular foci that rapidly scan along the chromosomes searching for lesions. Also has diadenylate cyclase activity, catalyzing the condensation of 2 ATP molecules into cyclic di-AMP (c-di-AMP). c-di-AMP likely acts as a signaling molecule that may couple DNA integrity with a cellular process. In Fusobacterium nucleatum subsp. nucleatum (strain ATCC 25586 / DSM 15643 / BCRC 10681 / CIP 101130 / JCM 8532 / KCTC 2640 / LMG 13131 / VPI 4355), this protein is DNA integrity scanning protein DisA.